The sequence spans 184 residues: MLTMKDIIRDGHPTLRAKAEEVPLPLSTEDRQLIDDMLEFLKMSQDEEQSRKYQLRSGVGIAAPQLNHKKRMLVIHFYDEKKGDYVTHQLINPKIISHSVEKSYLPTGEGCLSVDEAVPGIVHRYARITVKAYTPDGEEVKLRLKDFSAIVAQHEIDHLNGVMFYDHIDKADPMKVQKDAIAVE.

The Fe cation site is built by cysteine 111 and histidine 154. Residue glutamate 155 is part of the active site. Histidine 158 serves as a coordination point for Fe cation.

The protein belongs to the polypeptide deformylase family. It depends on Fe(2+) as a cofactor.

The catalysed reaction is N-terminal N-formyl-L-methionyl-[peptide] + H2O = N-terminal L-methionyl-[peptide] + formate. Removes the formyl group from the N-terminal Met of newly synthesized proteins. Requires at least a dipeptide for an efficient rate of reaction. N-terminal L-methionine is a prerequisite for activity but the enzyme has broad specificity at other positions. This Macrococcus caseolyticus (strain JCSC5402) (Macrococcoides caseolyticum) protein is Peptide deformylase.